The chain runs to 180 residues: UPF0227 protein PC1_2487 (180 aa).

Belongs to the UPF0227 family.

The protein is UPF0227 protein PC1_2487 of Pectobacterium carotovorum subsp. carotovorum (strain PC1).